The following is a 420-amino-acid chain: Bone morphogenetic protein 2 (420 aa).

Positions 1–23 (MVAVVRSLMVLLLAQVLLEGATG) are cleaved as a signal peptide. A propeptide spanning residues 24 to 303 (LIPEVGRRRY…DSVLHTREKR (280 aa)) is cleaved from the precursor. N-linked (GlcNAc...) asparagine glycosylation is found at Asn-138, Asn-167, Asn-168, Asn-172, and Asn-362. Cystine bridges form between Cys-320–Cys-385, Cys-349–Cys-417, and Cys-353–Cys-419.

Belongs to the TGF-beta family. Homodimer; disulfide-linked.

It localises to the secreted. Induces cartilage and bone formation. The chain is Bone morphogenetic protein 2 (bmp2) from Tetraodon nigroviridis (Spotted green pufferfish).